A 258-amino-acid chain; its full sequence is Snake venom serine protease 2 (258 aa).

The first 18 residues, 1–18 (MVLIRVLANLLILQLSYA), serve as a signal peptide directing secretion. A propeptide spanning residues 19 to 24 (QKSSEL) is cleaved from the precursor. One can recognise a Peptidase S1 domain in the interval 25–249 (VFGGRPCNIN…YNDWVQSIIA (225 aa)). 6 disulfide bridges follow: cysteine 31–cysteine 163, cysteine 50–cysteine 66, cysteine 98–cysteine 256, cysteine 142–cysteine 210, cysteine 174–cysteine 189, and cysteine 200–cysteine 225. Asparagine 44 is a glycosylation site (N-linked (GlcNAc...) asparagine). Residues histidine 65 and aspartate 110 each act as charge relay system in the active site. N-linked (GlcNAc...) asparagine glycans are attached at residues asparagine 122 and asparagine 185. Serine 204 functions as the Charge relay system in the catalytic mechanism.

This sequence belongs to the peptidase S1 family. Snake venom subfamily. As to quaternary structure, monomer. As to expression, expressed by the venom gland.

It is found in the secreted. With respect to regulation, inhibited by PMSF at 2 mM concentration but not by EDTA. Its function is as follows. Snake venom serine protease that may act in the hemostasis system of the prey. Has weak fibrinogen clotting activity. Possesses amidolysis activity towards S-2251 (substrate for plasmin) but has no hydrolytic activity with S-2302 (plasma kallikrein substrate) or S-2238 (thrombin substrate). In Protobothrops jerdonii (Jerdon's pitviper), this protein is Snake venom serine protease 2.